Here is a 555-residue protein sequence, read N- to C-terminus: Beta-fructofuranosidase, cell wall isozyme (555 aa).

The first 22 residues, 1-22, serve as a signal peptide directing secretion; the sequence is MAISSIFLLSLFSLIYVIPIEA. Substrate-binding positions include 58–61, Gln77, Trp85, and 120–121; these read WIND and WS. Asp61 is a catalytic residue. Residue Asp140 is part of the active site. N-linked (GlcNAc...) asparagine glycans are attached at residues Asn154 and Asn181. Residues 186–187, Glu241, and Asp277 contribute to the substrate site; that span reads RD. Asn337 carries N-linked (GlcNAc...) asparagine glycosylation. Cys435 and Cys481 are disulfide-bonded.

This sequence belongs to the glycosyl hydrolase 32 family.

It catalyses the reaction Hydrolysis of terminal non-reducing beta-D-fructofuranoside residues in beta-D-fructofuranosides.. In Pisum sativum (Garden pea), this protein is Beta-fructofuranosidase, cell wall isozyme (BFRUCT1).